We begin with the raw amino-acid sequence, 192 residues long: Peptidyl-tRNA hydrolase (192 aa).

Residue Y18 coordinates tRNA. Residue H23 is the Proton acceptor of the active site. Residues F69, N71, and N117 each contribute to the tRNA site.

Belongs to the PTH family. In terms of assembly, monomer.

The protein resides in the cytoplasm. The enzyme catalyses an N-acyl-L-alpha-aminoacyl-tRNA + H2O = an N-acyl-L-amino acid + a tRNA + H(+). In terms of biological role, hydrolyzes ribosome-free peptidyl-tRNAs (with 1 or more amino acids incorporated), which drop off the ribosome during protein synthesis, or as a result of ribosome stalling. Catalyzes the release of premature peptidyl moieties from peptidyl-tRNA molecules trapped in stalled 50S ribosomal subunits, and thus maintains levels of free tRNAs and 50S ribosomes. This is Peptidyl-tRNA hydrolase from Neisseria gonorrhoeae (strain ATCC 700825 / FA 1090).